The chain runs to 278 residues: Large ribosomal subunit protein uL2 (278 aa).

Residues 222 to 264 (RGVAMNPVDHPHGGGEGRTSGGRNPVTPWGVPTKGKKTRSNKR) form a disordered region.

It belongs to the universal ribosomal protein uL2 family. As to quaternary structure, part of the 50S ribosomal subunit. Forms a bridge to the 30S subunit in the 70S ribosome.

In terms of biological role, one of the primary rRNA binding proteins. Required for association of the 30S and 50S subunits to form the 70S ribosome, for tRNA binding and peptide bond formation. It has been suggested to have peptidyltransferase activity; this is somewhat controversial. Makes several contacts with the 16S rRNA in the 70S ribosome. This chain is Large ribosomal subunit protein uL2, found in Methylobacterium radiotolerans (strain ATCC 27329 / DSM 1819 / JCM 2831 / NBRC 15690 / NCIMB 10815 / 0-1).